Reading from the N-terminus, the 167-residue chain is NADH-quinone oxidoreductase subunit I 1 (167 aa).

4Fe-4S ferredoxin-type domains are found at residues Leu-58–Glu-88 and Thr-98–Asn-127. [4Fe-4S] cluster-binding residues include Cys-68, Cys-71, Cys-74, Cys-78, Cys-107, Cys-110, Cys-113, and Cys-117.

This sequence belongs to the complex I 23 kDa subunit family. NDH-1 is composed of 14 different subunits. Subunits NuoA, H, J, K, L, M, N constitute the membrane sector of the complex. It depends on [4Fe-4S] cluster as a cofactor.

The protein localises to the cell inner membrane. It catalyses the reaction a quinone + NADH + 5 H(+)(in) = a quinol + NAD(+) + 4 H(+)(out). In terms of biological role, NDH-1 shuttles electrons from NADH, via FMN and iron-sulfur (Fe-S) centers, to quinones in the respiratory chain. The immediate electron acceptor for the enzyme in this species is believed to be ubiquinone. Couples the redox reaction to proton translocation (for every two electrons transferred, four hydrogen ions are translocated across the cytoplasmic membrane), and thus conserves the redox energy in a proton gradient. The chain is NADH-quinone oxidoreductase subunit I 1 from Cereibacter sphaeroides (strain ATCC 17029 / ATH 2.4.9) (Rhodobacter sphaeroides).